Here is a 131-residue protein sequence, read N- to C-terminus: Conotoxin Cal8.1 (131 aa).

Positions 1 to 19 (MKLLLTLLLGSALMCITLA) are cleaved as a signal peptide. Residues 20 to 38 (DECGLGTHRPVKEVIDNVR) constitute a propeptide that is removed on maturation.

In terms of processing, contains 4 disulfide bonds. As to expression, expressed by the venom duct.

The protein localises to the secreted. Probable neurotoxin with unknown target. Possibly targets ion channels. The protein is Conotoxin Cal8.1 of Californiconus californicus (California cone).